We begin with the raw amino-acid sequence, 355 residues long: S-adenosylmethionine:tRNA ribosyltransferase-isomerase (355 aa).

The protein belongs to the QueA family. In terms of assembly, monomer.

Its subcellular location is the cytoplasm. It catalyses the reaction 7-aminomethyl-7-carbaguanosine(34) in tRNA + S-adenosyl-L-methionine = epoxyqueuosine(34) in tRNA + adenine + L-methionine + 2 H(+). It functions in the pathway tRNA modification; tRNA-queuosine biosynthesis. Its function is as follows. Transfers and isomerizes the ribose moiety from AdoMet to the 7-aminomethyl group of 7-deazaguanine (preQ1-tRNA) to give epoxyqueuosine (oQ-tRNA). In Pectobacterium carotovorum subsp. carotovorum (strain PC1), this protein is S-adenosylmethionine:tRNA ribosyltransferase-isomerase.